The following is a 522-amino-acid chain: Protein GDS1 (522 aa).

Disordered regions lie at residues alanine 56–aspartate 88, glutamine 222–serine 268, leucine 300–alanine 391, and serine 433–glutamate 489. The segment covering leucine 62 to isoleucine 73 has biased composition (polar residues). Positions lysine 74–aspartate 88 are enriched in basic and acidic residues. 4 stretches are compositionally biased toward polar residues: residues glutamine 222–asparagine 236, serine 244–aspartate 260, leucine 300–proline 314, and serine 355–lysine 366. Over residues serine 368 to serine 378 the composition is skewed to low complexity. Over residues lysine 379 to alanine 391 the composition is skewed to polar residues. Residues glutamate 439–serine 467 are compositionally biased toward low complexity. Residues aspartate 468–glutamate 489 are compositionally biased toward polar residues.

In terms of biological role, involved in nuclear control of mitochondria. The protein is Protein GDS1 (GDS1) of Saccharomyces cerevisiae (strain ATCC 204508 / S288c) (Baker's yeast).